We begin with the raw amino-acid sequence, 387 residues long: Patatin-01 (387 aa).

A signal peptide spans 1 to 23 (MATTKSFLILSVMILATTSSTFA). The region spanning 32–230 (LSIDGGGIKG…TVADPALLSV (199 aa)) is the PNPLA domain. The GXGXXG motif lies at 36–41 (GGGIKG). The GXSXG motif lies at 75 to 79 (GTSTG). Serine 77 serves as the catalytic Nucleophile. The N-linked (GlcNAc...) asparagine glycan is linked to asparagine 115. The active-site Proton acceptor is the aspartate 216. Residues 216–218 (DGA) carry the DGA/G motif. Positions 361–385 (ETYEEALKRFAKLLSDRKKLRANKA) form a coiled coil.

Belongs to the patatin family. Tuber.

The protein localises to the vacuole. Probable lipolytic acyl hydrolase (LAH), an activity which is thought to be involved in the response of tubers to pathogens. This chain is Patatin-01, found in Solanum tuberosum (Potato).